The sequence spans 709 residues: Nicastrin (709 aa).

Positions 1–33 (MATAGGGSGADPGSRGLLRLLSFCVLLAGLCRG) are cleaved as a signal peptide. At 34–669 (NSVERKIYIP…IFLIASKELE (636 aa)) the chain is on the extracellular side. N-linked (GlcNAc...) asparagine glycosylation is found at Asn45 and Asn55. 2 cysteine pairs are disulfide-bonded: Cys50–Cys62 and Cys140–Cys159. N-linked (GlcNAc...) asparagine glycans are attached at residues Asn187, Asn200, and Asn204. Disulfide bonds link Cys195–Cys213 and Cys230–Cys248. 11 N-linked (GlcNAc...) asparagine glycosylation sites follow: Asn264, Asn387, Asn417, Asn435, Asn464, Asn506, Asn530, Asn562, Asn573, Asn580, and Asn612. A disulfide bridge links Cys586 with Cys620. The helical transmembrane segment at 670–690 (LITLTVGFGILIFSLIVTYCI) threads the bilayer. At 691–709 (NAKADVLFIAPREPGAVSY) the chain is on the cytoplasmic side.

This sequence belongs to the nicastrin family. In terms of assembly, component of the gamma-secretase complex. The functional gamma-secretase complex is composed of at least four polypeptides: a presenilin homodimer (PSEN1 or PSEN2), nicastrin (NCSTN), APH1 (APH1A or APH1B) and PSENEN/PEN2. Binds to proteolytic processed C-terminal fragments C83 and C99 of the amyloid precursor protein (APP). Interacts with PSEN1 and PSEN2. In terms of processing, N-glycosylated. Detected in brain (at protein level). Widely expressed.

It localises to the membrane. The protein localises to the cytoplasmic vesicle membrane. It is found in the melanosome. Its function is as follows. Essential subunit of the gamma-secretase complex, an endoprotease complex that catalyzes the intramembrane cleavage of integral membrane proteins such as Notch receptors and APP (amyloid-beta precursor protein). The gamma-secretase complex plays a role in Notch and Wnt signaling cascades and regulation of downstream processes via its role in processing key regulatory proteins, and by regulating cytosolic CTNNB1 levels. This is Nicastrin (NCSTN) from Homo sapiens (Human).